We begin with the raw amino-acid sequence, 305 residues long: tRNA dimethylallyltransferase (305 aa).

8-15 (GPTAVGKT) contacts ATP. 10 to 15 (TAVGKT) provides a ligand contact to substrate. Positions 33–36 (DSRQ) are interaction with substrate tRNA.

It belongs to the IPP transferase family. In terms of assembly, monomer. Mg(2+) is required as a cofactor.

The catalysed reaction is adenosine(37) in tRNA + dimethylallyl diphosphate = N(6)-dimethylallyladenosine(37) in tRNA + diphosphate. In terms of biological role, catalyzes the transfer of a dimethylallyl group onto the adenine at position 37 in tRNAs that read codons beginning with uridine, leading to the formation of N6-(dimethylallyl)adenosine (i(6)A). In Thermotoga sp. (strain RQ2), this protein is tRNA dimethylallyltransferase.